We begin with the raw amino-acid sequence, 402 residues long: Nicotinate phosphoribosyltransferase (402 aa).

His226 bears the Phosphohistidine; by autocatalysis mark.

It belongs to the NAPRTase family. Transiently phosphorylated on a His residue during the reaction cycle. Phosphorylation strongly increases the affinity for substrates and increases the rate of nicotinate D-ribonucleotide production. Dephosphorylation regenerates the low-affinity form of the enzyme, leading to product release.

It catalyses the reaction nicotinate + 5-phospho-alpha-D-ribose 1-diphosphate + ATP + H2O = nicotinate beta-D-ribonucleotide + ADP + phosphate + diphosphate. The protein operates within cofactor biosynthesis; NAD(+) biosynthesis; nicotinate D-ribonucleotide from nicotinate: step 1/1. In terms of biological role, catalyzes the synthesis of beta-nicotinate D-ribonucleotide from nicotinate and 5-phospho-D-ribose 1-phosphate at the expense of ATP. This is Nicotinate phosphoribosyltransferase from Chromobacterium violaceum (strain ATCC 12472 / DSM 30191 / JCM 1249 / CCUG 213 / NBRC 12614 / NCIMB 9131 / NCTC 9757 / MK).